The following is a 358-amino-acid chain: Tripartite motif-containing protein 54 (358 aa).

An RING-type zinc finger spans residues 26–82; that stretch reads CPICLEMFSKPVVILPCQHNLCRKCANDVFQASNPLWQSRGSTTVSSGGRFRCPSCR. The B box-type zinc-finger motif lies at 121–163; sequence EQHLMCEEHEEEKINIYCLSCEVPTCSLCKVFGAHKDCEVAPL. Residues Cys-126, His-129, Cys-149, and His-155 each coordinate Zn(2+). Residues 168–211 are mediates microtubule-binding and homooligomerization; that stretch reads KRQKSELSDGIAMLVAGNDRVQAVITQMEEVCQTIEDNSRRQKQ. A coiled-coil region spans residues 220–258; sequence LCAVLEERKGELLQALAREQEEKLQRVRGLIRQYGDHLE. One can recognise a COS domain in the interval 271 to 329; it reads MEEPQMALYLQQAKELINKVGAMSKVELAGRPEPGYESMEQFTVRVEHVAEMLRTIDFQ. Residues 326–358 form a disordered region; that stretch reads IDFQPGASGEEEEVAPDGEEGSAGPEEERPDGP. The span at 334–345 shows a compositional bias: acidic residues; that stretch reads GEEEEVAPDGEE.

Homooligomer and heterooligomer. Interacts with tubulin. Interacts with TRIM63 and probably with TRIM55. As to expression, specifically expressed in heart and skeletal muscle.

Its subcellular location is the cytoplasm. The protein resides in the cytoskeleton. The protein localises to the myofibril. It localises to the sarcomere. It is found in the z line. Functionally, may bind and stabilize microtubules during myotubes formation. The protein is Tripartite motif-containing protein 54 (TRIM54) of Homo sapiens (Human).